The chain runs to 112 residues: Protein SMALL AUXIN UP-REGULATED RNA 10 (112 aa).

It belongs to the ARG7 family. Confined to the veins and petioles of rosette leaves and cauline leaves, and specifically expressed at the abaxial side of inflorescence branche; relocates to both the adaxial (Ad) and abaxial (Ab) sides of the branch in reduced red:far-red (R:FR) light, during shade. Also present in flowers.

The protein localises to the cell membrane. Functionally, provide a mechanistic link between auxin and plasma membrane H(+)-ATPases (PM H(+)-ATPases, e.g. AHA1 and AHA2), and triggers PM H(+)-ATPases activity by promoting phosphorylation of their C-terminal autoinhibitory domain as a result of PP2C-D subfamily of type 2C phosphatases inhibition, thus leading to the acidification of the apoplast and the facilitation of solutes and water uptake to drive cell expansion. Triggers plant growth probably by promoting cell elongation. Regulates branch angles and bending. The sequence is that of Protein SMALL AUXIN UP-REGULATED RNA 10 from Arabidopsis thaliana (Mouse-ear cress).